Consider the following 585-residue polypeptide: Proline--tRNA ligase (585 aa).

The protein belongs to the class-II aminoacyl-tRNA synthetase family. ProS type 1 subfamily. As to quaternary structure, homodimer.

The protein resides in the cytoplasm. The catalysed reaction is tRNA(Pro) + L-proline + ATP = L-prolyl-tRNA(Pro) + AMP + diphosphate. Its function is as follows. Catalyzes the attachment of proline to tRNA(Pro) in a two-step reaction: proline is first activated by ATP to form Pro-AMP and then transferred to the acceptor end of tRNA(Pro). As ProRS can inadvertently accommodate and process non-cognate amino acids such as alanine and cysteine, to avoid such errors it has two additional distinct editing activities against alanine. One activity is designated as 'pretransfer' editing and involves the tRNA(Pro)-independent hydrolysis of activated Ala-AMP. The other activity is designated 'posttransfer' editing and involves deacylation of mischarged Ala-tRNA(Pro). The misacylated Cys-tRNA(Pro) is not edited by ProRS. This Corynebacterium diphtheriae (strain ATCC 700971 / NCTC 13129 / Biotype gravis) protein is Proline--tRNA ligase.